The following is a 719-amino-acid chain: Potassium channel KOR2 (719 aa).

The Cytoplasmic portion of the chain corresponds to 1–63; that stretch reads MAEEYELNEI…VIHPNGRWYR (63 aa). A helical membrane pass occupies residues 64 to 84; the sequence is IWANMMFLWSIYSTFFTPFEF. Residues 85–93 are Extracellular-facing; the sequence is SFFRGLPDQ. A helical transmembrane segment spans residues 94 to 114; sequence LLDLECVQLVFLADVAVHFFL. Over 115–137 the chain is Cytoplasmic; the sequence is AYRDPHTYRMVHDKRHIALRYIK. The helical transmembrane segment at 138–158 threads the bilayer; that stretch reads GSFALDVLGCFPWDAIYKVTG. The Extracellular segment spans residues 159–164; that stretch reads RVEAVR. A helical; Voltage-sensor transmembrane segment spans residues 165–185; sequence WLVWVRLYRGRKVMAFFKRVE. The Cytoplasmic segment spans residues 186 to 199; the sequence is KDIRVSYLLTRIVK. Residues 200–220 traverse the membrane as a helical segment; sequence LITVELYCTHTAACGFYYLAT. The Extracellular segment spans residues 221-255; sequence TLPPAREGGTWIGSLSLGDARYINFREVDLLTRYV. The pore-forming intramembrane region spans 256–275; that stretch reads TSLYLAIVTMATVGYGDIHA. Over 276-285 the chain is Extracellular; it reads VNTREMAFTV. The helical transmembrane segment at 286 to 306 threads the bilayer; sequence VYISFSIVLSAYLIGNMTALI. At 307-719 the chain is on the cytoplasmic side; that stretch reads VKGSRTERFR…LEQARTVATN (413 aa). An a nucleoside 3',5'-cyclic phosphate-binding site is contributed by 383–503; the sequence is LFRGCSDDFL…SQILSNLLKG (121 aa). 5 ANK repeats span residues 523–556, 560–589, 593–622, 624–653, and 657–686; these read KQESELVLGVNNAAYHGDIFRLKSLISAGADPSK, DGRTALHIAALRGYENIVRFLIQRGANVNS, FGNSPLLQAVKSGHDRITSLLVEHGAILNL, DAGGYLCRVVRGGRIDLLKKLLRFGISPNC, and DQRTPLHIAAAEGLHLVASTLIESGADIQA.

This sequence belongs to the potassium channel family. Plant (TC 1.A.1.4) subfamily.

Its subcellular location is the membrane. Probable outward-rectifying potassium channel. The protein is Potassium channel KOR2 of Oryza sativa subsp. japonica (Rice).